The sequence spans 250 residues: Triosephosphate isomerase (250 aa).

Residue 8–10 coordinates substrate; sequence NWK. His-96 serves as the catalytic Electrophile. The active-site Proton acceptor is the Glu-169. Residues Gly-175, Ser-214, and 235–236 contribute to the substrate site; that span reads GG.

The protein belongs to the triosephosphate isomerase family. Homodimer.

It is found in the cytoplasm. It catalyses the reaction D-glyceraldehyde 3-phosphate = dihydroxyacetone phosphate. Its pathway is carbohydrate biosynthesis; gluconeogenesis. The protein operates within carbohydrate degradation; glycolysis; D-glyceraldehyde 3-phosphate from glycerone phosphate: step 1/1. Functionally, involved in the gluconeogenesis. Catalyzes stereospecifically the conversion of dihydroxyacetone phosphate (DHAP) to D-glyceraldehyde-3-phosphate (G3P). This is Triosephosphate isomerase from Oleidesulfovibrio alaskensis (strain ATCC BAA-1058 / DSM 17464 / G20) (Desulfovibrio alaskensis).